A 137-amino-acid polypeptide reads, in one-letter code: Small ribosomal subunit protein uS9c (137 aa).

Belongs to the universal ribosomal protein uS9 family.

It is found in the plastid. The protein localises to the chloroplast. In Mesostigma viride (Green alga), this protein is Small ribosomal subunit protein uS9c (rps9).